The following is a 486-amino-acid chain: Glutamyl-tRNA(Gln) amidotransferase subunit A (486 aa).

Catalysis depends on charge relay system residues lysine 76 and serine 151. The active-site Acyl-ester intermediate is serine 175.

Belongs to the amidase family. GatA subfamily. As to quaternary structure, heterotrimer of A, B and C subunits.

The catalysed reaction is L-glutamyl-tRNA(Gln) + L-glutamine + ATP + H2O = L-glutaminyl-tRNA(Gln) + L-glutamate + ADP + phosphate + H(+). Functionally, allows the formation of correctly charged Gln-tRNA(Gln) through the transamidation of misacylated Glu-tRNA(Gln) in organisms which lack glutaminyl-tRNA synthetase. The reaction takes place in the presence of glutamine and ATP through an activated gamma-phospho-Glu-tRNA(Gln). This Nitrosomonas eutropha (strain DSM 101675 / C91 / Nm57) protein is Glutamyl-tRNA(Gln) amidotransferase subunit A.